The following is a 718-amino-acid chain: Ribosome-releasing factor 2, mitochondrial (718 aa).

The N-terminal 29 residues, 1–29, are a transit peptide targeting the mitochondrion; that stretch reads MLKCAWQNGPRQSNRWLWQLSNQIWKRSY. Residues 31 to 310 enclose the tr-type G domain; sequence SKIRNIGILA…AVNSYLPAPE (280 aa). GTP is bound by residues 40-47, 104-108, and 158-161; these read AHIDAGKT, DTPGH, and NKMD.

This sequence belongs to the TRAFAC class translation factor GTPase superfamily. Classic translation factor GTPase family. EF-G/EF-2 subfamily.

It is found in the mitochondrion. Its function is as follows. Mitochondrial GTPase that mediates the disassembly of ribosomes from messenger RNA at the termination of mitochondrial protein biosynthesis. Not involved in the GTP-dependent ribosomal translocation step during translation elongation. This chain is Ribosome-releasing factor 2, mitochondrial, found in Drosophila erecta (Fruit fly).